The following is a 68-amino-acid chain: Conotoxin TsMMSK-021 (68 aa).

Positions 1–20 (MMSKLGVLLTICLLLFPLTA) are cleaved as a signal peptide. A propeptide spanning residues 21–52 (VRLDGDQHTDRPADRMQDIATEQHPLFDPVKR) is cleaved from the precursor. 3 disulfides stabilise this stretch: C53/C66, C54/C62, and C58/C65. Residue P64 is modified to 4-hydroxyproline.

It belongs to the conotoxin M superfamily. Expressed by the venom duct.

Its subcellular location is the secreted. The polypeptide is Conotoxin TsMMSK-021 (Conus tessulatus (Tessellate cone)).